A 159-amino-acid chain; its full sequence is FCS-Like Zinc finger 2 (159 aa).

The FLZ-type zinc-finger motif lies at histidine 75–glutamate 119. The span at glutamate 113–glutamine 122 shows a compositional bias: basic and acidic residues. The interval glutamate 113–alanine 159 is disordered.

It belongs to the FLZ family. Interacts with KIN10 and KIN11 via its FLZ-type zinc finger domain. Interacts with KINB1, KINB2, KINB3 and SNF4 via its N-terminal part. Forms heterodimer with FLZ7, FLZ10, FLZ11, FLZ12, FLZ15, FLZ17 and FLZ18 in vitro.

May act as an adapter to facilitate the interaction of SnRK1 complex with effector proteins, conferring tissue- and stimulus-type specific differences in the SnRK1 regulation pathway. This Arabidopsis thaliana (Mouse-ear cress) protein is FCS-Like Zinc finger 2.